A 629-amino-acid polypeptide reads, in one-letter code: Transmembrane 9 superfamily protein C1105.08 (629 aa).

The signal sequence occupies residues M1–S26. Residues F27–W266 lie on the Lumenal side of the membrane. N-linked (GlcNAc...) asparagine glycosylation occurs at N157. Residues I267 to L287 form a helical membrane-spanning segment. Residues Y288 to T337 are Cytoplasmic-facing. A helical membrane pass occupies residues G338–A358. Residues P359 to S364 are Lumenal-facing. A helical transmembrane segment spans residues L365–A385. At L386–L401 the chain is on the cytoplasmic side. The chain crosses the membrane as a helical span at residues L402 to F422. Residues W423–W436 are Lumenal-facing. A helical transmembrane segment spans residues L437 to I457. The Cytoplasmic portion of the chain corresponds to G458 to P488. Residues S489–L509 form a helical membrane-spanning segment. Residues D510–F519 are Lumenal-facing. A helical transmembrane segment spans residues M520–Y544. The Cytoplasmic portion of the chain corresponds to F545–S558. The chain crosses the membrane as a helical span at residues F559–F579. Over K580 to L598 the chain is Lumenal. A helical membrane pass occupies residues I599–V619. Residues N620–D629 are Cytoplasmic-facing.

Belongs to the nonaspanin (TM9SF) (TC 9.A.2) family.

It is found in the golgi apparatus membrane. The protein resides in the vacuole membrane. This Schizosaccharomyces pombe (strain 972 / ATCC 24843) (Fission yeast) protein is Transmembrane 9 superfamily protein C1105.08.